The following is a 702-amino-acid chain: Elongation factor G (702 aa).

Residues 8–290 (HRVRNIGIAA…AVAMYLPAPT (283 aa)) form the tr-type G domain. Residues 17-24 (AHIDAGKT), 87-91 (DTPGH), and 141-144 (NKMD) each bind GTP.

This sequence belongs to the TRAFAC class translation factor GTPase superfamily. Classic translation factor GTPase family. EF-G/EF-2 subfamily.

The protein resides in the cytoplasm. Its function is as follows. Catalyzes the GTP-dependent ribosomal translocation step during translation elongation. During this step, the ribosome changes from the pre-translocational (PRE) to the post-translocational (POST) state as the newly formed A-site-bound peptidyl-tRNA and P-site-bound deacylated tRNA move to the P and E sites, respectively. Catalyzes the coordinated movement of the two tRNA molecules, the mRNA and conformational changes in the ribosome. This is Elongation factor G from Aliarcobacter butzleri (strain RM4018) (Arcobacter butzleri).